The following is a 590-amino-acid chain: MNERLKEKLAVLPEQPGCYLMKDKHGTVIYVGKAKSLKARVRSYFTGTHDGKTQRLVEEIADFEYIVTSSNAEALILEMNLIKKHDPKYNVMLKDDKSYPFIKITAEKHPRLLITRKVKKDGGKYFGPYPNVQAANETKKLLDRLYPLRKCSTLPSRACLYYHMGQCLAPCVHPVSDEQNKAMVEQIVRFLNGGYEDVKRELAEKMHEAAETLEFERAKEYRDQIAAIEMTMEKQKMMLNDFIDRDVFGYAYDKGWMCVQVFFLRQGKLIERDVSIFPLYQDPDEEMLTFLGQFYAKAHHLKPKEVVLPSDIDGELARELLGVAVVQPKKGKKKELVELASKNAAIALKEKFYFIERDEERTIKAVERLGERLGIPAPRRIEAFDNSNIYGADPVSALVVFLDGKPAKKEYRKYKVKTVAGPNDYETMREVVRRRYTRVLKEGLPLPDLIIIDGGKGHLSAVRDVLENELGLDVPLAGLAKDEKHRTSELLAGDPPDVVPLDRQSQEFYLLQRIQDEVHRFAVMFHRKTRQKTMFHSVLDDIPGVGEKRKKALLNYFGSVKKMKEATVEELQRANIPRAVAEKIYEKLHE.

One can recognise a GIY-YIG domain in the interval 14-91 (EQPGCYLMKD…IKKHDPKYNV (78 aa)). In terms of domain architecture, UVR spans 196 to 231 (EDVKRELAEKMHEAAETLEFERAKEYRDQIAAIEMT).

This sequence belongs to the UvrC family. Interacts with UvrB in an incision complex.

It is found in the cytoplasm. Its function is as follows. The UvrABC repair system catalyzes the recognition and processing of DNA lesions. UvrC both incises the 5' and 3' sides of the lesion. The N-terminal half is responsible for the 3' incision and the C-terminal half is responsible for the 5' incision. In Geobacillus kaustophilus (strain HTA426), this protein is UvrABC system protein C.